Here is a 287-residue protein sequence, read N- to C-terminus: Large ribosomal subunit protein uL2 (287 aa).

The tract at residues 221–287 (RGSVMNPCDH…SKRSRGGRDS (67 aa)) is disordered. Over residues 271-287 (LRKRRKTSKRSRGGRDS) the composition is skewed to basic residues.

The protein belongs to the universal ribosomal protein uL2 family. In terms of assembly, part of the 50S ribosomal subunit. Forms a bridge to the 30S subunit in the 70S ribosome.

Its function is as follows. One of the primary rRNA binding proteins. Required for association of the 30S and 50S subunits to form the 70S ribosome, for tRNA binding and peptide bond formation. It has been suggested to have peptidyltransferase activity; this is somewhat controversial. Makes several contacts with the 16S rRNA in the 70S ribosome. This chain is Large ribosomal subunit protein uL2, found in Synechococcus sp. (strain CC9605).